Here is a 259-residue protein sequence, read N- to C-terminus: NAD(P)H-quinone oxidoreductase subunit K 2 (259 aa).

[4Fe-4S] cluster is bound by residues Cys52, Cys53, Cys117, and Cys148.

This sequence belongs to the complex I 20 kDa subunit family. In terms of assembly, NDH-1 can be composed of about 15 different subunits; different subcomplexes with different compositions have been identified which probably have different functions. [4Fe-4S] cluster is required as a cofactor.

The protein localises to the cellular thylakoid membrane. It carries out the reaction a plastoquinone + NADH + (n+1) H(+)(in) = a plastoquinol + NAD(+) + n H(+)(out). The catalysed reaction is a plastoquinone + NADPH + (n+1) H(+)(in) = a plastoquinol + NADP(+) + n H(+)(out). Functionally, NDH-1 shuttles electrons from an unknown electron donor, via FMN and iron-sulfur (Fe-S) centers, to quinones in the respiratory and/or the photosynthetic chain. The immediate electron acceptor for the enzyme in this species is believed to be plastoquinone. Couples the redox reaction to proton translocation, and thus conserves the redox energy in a proton gradient. Cyanobacterial NDH-1 also plays a role in inorganic carbon-concentration. The protein is NAD(P)H-quinone oxidoreductase subunit K 2 (ndhK2) of Cyanothece sp. (strain PCC 7425 / ATCC 29141).